We begin with the raw amino-acid sequence, 133 residues long: S-adenosylmethionine decarboxylase proenzyme (133 aa).

Serine 64 serves as the catalytic Schiff-base intermediate with substrate; via pyruvic acid. Serine 64 carries the post-translational modification Pyruvic acid (Ser); by autocatalysis. Histidine 69 (proton acceptor; for processing activity) is an active-site residue. Residue cysteine 84 is the Proton donor; for catalytic activity of the active site.

This sequence belongs to the prokaryotic AdoMetDC family. Type 1 subfamily. Heterotetramer of two alpha and two beta chains arranged as a dimer of alpha/beta heterodimers. It depends on pyruvate as a cofactor. In terms of processing, is synthesized initially as an inactive proenzyme. Formation of the active enzyme involves a self-maturation process in which the active site pyruvoyl group is generated from an internal serine residue via an autocatalytic post-translational modification. Two non-identical subunits are generated from the proenzyme in this reaction, and the pyruvate is formed at the N-terminus of the alpha chain, which is derived from the carboxyl end of the proenzyme. The post-translation cleavage follows an unusual pathway, termed non-hydrolytic serinolysis, in which the side chain hydroxyl group of the serine supplies its oxygen atom to form the C-terminus of the beta chain, while the remainder of the serine residue undergoes an oxidative deamination to produce ammonia and the pyruvoyl group blocking the N-terminus of the alpha chain.

It catalyses the reaction S-adenosyl-L-methionine + H(+) = S-adenosyl 3-(methylsulfanyl)propylamine + CO2. It participates in amine and polyamine biosynthesis; S-adenosylmethioninamine biosynthesis; S-adenosylmethioninamine from S-adenosyl-L-methionine: step 1/1. Its function is as follows. Catalyzes the decarboxylation of S-adenosylmethionine to S-adenosylmethioninamine (dcAdoMet), the propylamine donor required for the synthesis of the polyamines spermine and spermidine from the diamine putrescine. The protein is S-adenosylmethionine decarboxylase proenzyme of Persephonella marina (strain DSM 14350 / EX-H1).